Reading from the N-terminus, the 338-residue chain is Phospho-2-dehydro-3-deoxyheptonate aldolase (338 aa).

The protein belongs to the class-I DAHP synthase family. As to quaternary structure, homotetramer. A divalent metal cation is required as a cofactor.

The catalysed reaction is D-erythrose 4-phosphate + phosphoenolpyruvate + H2O = 7-phospho-2-dehydro-3-deoxy-D-arabino-heptonate + phosphate. It participates in metabolic intermediate biosynthesis; chorismate biosynthesis; chorismate from D-erythrose 4-phosphate and phosphoenolpyruvate: step 1/7. Inhibited by L-phenylalanine and L-tyrosine. In terms of biological role, catalyzes the condensation of phosphoenolpyruvate (PEP) and D-erythrose-4-phosphate (E4P) giving rise to 3-deoxy-D-arabino-heptulosonate-7-phosphate (DAHP). This Thermotoga maritima (strain ATCC 43589 / DSM 3109 / JCM 10099 / NBRC 100826 / MSB8) protein is Phospho-2-dehydro-3-deoxyheptonate aldolase (aroF).